A 60-amino-acid chain; its full sequence is Metallothionein B (60 aa).

The segment at 1-28 is beta; sequence MDPCECSKSGTCNCGGSCTCTNCSCTSC. Residues Cys-4, Cys-6, Cys-12, Cys-14, Cys-18, Cys-20, Cys-23, Cys-25, Cys-28, Cys-32, Cys-33, Cys-35, Cys-36, Cys-40, Cys-43, Cys-47, Cys-49, Cys-54, Cys-58, and Cys-59 each coordinate a divalent metal cation. The alpha stretch occupies residues 29-60; the sequence is KKSCCPCCPSGCTKCASGCVCKGKTCDTSCCQ.

Belongs to the metallothionein superfamily. Type 1 family.

Functionally, metallothioneins have a high content of cysteine residues that bind various heavy metals. This Trematomus bernacchii (Emerald rockcod) protein is Metallothionein B (mtb).